The following is a 396-amino-acid chain: Cell division protein DivIB (396 aa).

Disordered stretches follow at residues 1-23 and 37-116; these read MSKD…SEWQ and EVAL…ATKE. Residues 1–130 lie on the Cytoplasmic side of the membrane; the sequence is MSKDKKNEDK…AKIPGIHILR (130 aa). Composition is skewed to basic and acidic residues over residues 37–65 and 75–116; these read EVAL…KQDQ and ESAK…ATKE. Residues 131–151 form a helical membrane-spanning segment; it reads AFTILFPSLLLLIVSAYLLSP. Residues 152–396 lie on the Extracellular side of the membrane; the sequence is YATMKDIRVE…NQTNQRSSRR (245 aa). One can recognise a POTRA domain in the interval 153 to 223; the sequence is ATMKDIRVEG…TKFTIKVKEY (71 aa). The segment covering 361–385 has biased composition (basic and acidic residues); the sequence is KAKQEAKEAEKKQEEEQKKQEEESN. Residues 361 to 396 form a disordered region; the sequence is KAKQEAKEAEKKQEEEQKKQEEESNRNQTNQRSSRR. Low complexity predominate over residues 386–396; the sequence is RNQTNQRSSRR.

This sequence belongs to the FtsQ/DivIB family. DivIB subfamily.

The protein resides in the cell membrane. Functionally, cell division protein that may be involved in stabilizing or promoting the assembly of the division complex. In Streptococcus pneumoniae (strain ATCC BAA-255 / R6), this protein is Cell division protein DivIB.